The primary structure comprises 216 residues: Protein-L-isoaspartate O-methyltransferase (216 aa).

Residue S64 is part of the active site.

It belongs to the methyltransferase superfamily. L-isoaspartyl/D-aspartyl protein methyltransferase family.

The protein resides in the cytoplasm. It carries out the reaction [protein]-L-isoaspartate + S-adenosyl-L-methionine = [protein]-L-isoaspartate alpha-methyl ester + S-adenosyl-L-homocysteine. Catalyzes the methyl esterification of L-isoaspartyl residues in peptides and proteins that result from spontaneous decomposition of normal L-aspartyl and L-asparaginyl residues. It plays a role in the repair and/or degradation of damaged proteins. The polypeptide is Protein-L-isoaspartate O-methyltransferase (Paracoccus denitrificans (strain Pd 1222)).